Reading from the N-terminus, the 957-residue chain is Valine--tRNA ligase (957 aa).

The short motif at 42-52 (PNVTGSLHMGH) is the 'HIGH' region element. A 'KMSKS' region motif is present at residues 554 to 558 (KMSKS). K557 lines the ATP pocket. Positions 890-956 (DKDAELARLA…LEAQQETIAA (67 aa)) form a coiled coil.

Belongs to the class-I aminoacyl-tRNA synthetase family. ValS type 1 subfamily. As to quaternary structure, monomer.

Its subcellular location is the cytoplasm. It carries out the reaction tRNA(Val) + L-valine + ATP = L-valyl-tRNA(Val) + AMP + diphosphate. Its function is as follows. Catalyzes the attachment of valine to tRNA(Val). As ValRS can inadvertently accommodate and process structurally similar amino acids such as threonine, to avoid such errors, it has a 'posttransfer' editing activity that hydrolyzes mischarged Thr-tRNA(Val) in a tRNA-dependent manner. The sequence is that of Valine--tRNA ligase from Aliivibrio fischeri (strain ATCC 700601 / ES114) (Vibrio fischeri).